Here is a 579-residue protein sequence, read N- to C-terminus: Folliculin (579 aa).

The disordered stretch occupies residues 32–52 (GASCGDSIGQGEQAEDEEMGI). Positions 86-242 (RSLAAGHPGY…RNGNAARSLT (157 aa)) constitute a uDENN FLCN/SMCR8-type domain. One can recognise a cDENN FLCN/SMCR8-type domain in the interval 337–491 (NMVQRRMGVF…ILNKIEAALS (155 aa)). The dDENN FLCN/SMCR8-type domain maps to 493–558 (ENLSMDVVDQ…LLKFWMTGLS (66 aa)).

It belongs to the folliculin family. In terms of assembly, component of the lysosomal folliculin complex (LFC).

It is found in the lysosome membrane. It localises to the cytoplasm. Its subcellular location is the cytosol. The protein resides in the cell projection. The protein localises to the cilium. It is found in the cytoskeleton. It localises to the microtubule organizing center. Its subcellular location is the centrosome. The protein resides in the spindle. The protein localises to the nucleus. GTPase-activating activity is inhibited in the folliculin complex (LFC), which stabilizes the GDP-bound state of RagA/RRAGA (or RagB/RRAGB), because Arg-164 is located far from the RagC/RRAGC or RagD/RRAGD nucleotide pocket. Disassembly of the LFC complex upon amino acid restimulation liberates the GTPase-activating activity. Multi-functional protein, involved in both the cellular response to amino acid availability and in the regulation of glycolysis. GTPase-activating protein that plays a key role in the cellular response to amino acid availability through regulation of the non-canonical mTORC1 signaling cascade controlling the MiT/TFE factors tfeb and tfe3. Activates mTORC1 by acting as a GTPase-activating protein: specifically stimulates GTP hydrolysis by RagC/RRAGC or RagD/RRAGD, promoting the conversion to the GDP-bound state of RagC/RRAGC or RagD/RRAGD, and thereby activating the kinase activity of mTORC1. The GTPase-activating activity is inhibited during starvation and activated in presence of nutrients. Acts as a key component for non-canonical mTORC1-dependent control of the MiT/TFE factors tfeb and tfe3, while it is not involved in mTORC1-dependent phosphorylation of canonical RPS6KB1/S6K1 and EIF4EBP1/4E-BP1. In low-amino acid conditions, the lysosomal folliculin complex (LFC) is formed on the membrane of lysosomes, which inhibits the GTPase-activating activity of flcn, inactivates mTORC1 and maximizes nuclear translocation of tfeb and tfe3. Upon amino acid restimulation, RagA/RRAGA (or RagB/RRAGB) nucleotide exchange promotes disassembly of the LFC complex and liberates the GTPase-activating activity of flcn, leading to activation of mTORC1 and subsequent cytoplasmic retention of tfeb and tfe3. Required for the exit of hematopoietic stem cell from pluripotency by promoting mTOR-dependent cytoplasmic retention of tfe3, thereby increasing Wnt signaling. Acts as an inhibitor of browning of adipose tissue by regulating mTOR-dependent cytoplasmic retention of tfe3. In response to flow stress, regulates STK11/LKB1 accumulation and mTORC1 activation through primary cilia. Required for starvation-induced perinuclear clustering of lysosomes by promoting association of rilp with its effector rab34. Involved in the control of embryonic stem cells differentiation; together with lamtor1 it is necessary to recruit and activate RagC/RRAGC and RagD/RRAGD at the lysosomes, and to induce exit of embryonic stem cells from pluripotency via non-canonical, mTOR-independent tfe3 inactivation. Regulates glycolysis by binding to lactate dehydrogenase ldha, acting as an uncompetitive inhibitor. The sequence is that of Folliculin from Xenopus tropicalis (Western clawed frog).